Consider the following 149-residue polypeptide: MERTFLAIKPDGVQRGLVGEIIRRFETKGFTLVGLKFLKVSKELAEQHYGVHRERPFFGSLVEFITSSPVVAMVWEGDGVVASARKIIGATNPLTSEPGTIRGDFGINIGRNLIHGSDAPETAQQEIALWFKDEELVNWQPHITPWLHE.

Residues Lys9, Phe57, Arg85, Thr91, Arg102, and Asn112 each coordinate ATP. His115 (pros-phosphohistidine intermediate) is an active-site residue.

It belongs to the NDK family. As to quaternary structure, homotetramer. Mg(2+) is required as a cofactor.

The protein localises to the cytoplasm. It carries out the reaction a 2'-deoxyribonucleoside 5'-diphosphate + ATP = a 2'-deoxyribonucleoside 5'-triphosphate + ADP. It catalyses the reaction a ribonucleoside 5'-diphosphate + ATP = a ribonucleoside 5'-triphosphate + ADP. Its function is as follows. Major role in the synthesis of nucleoside triphosphates other than ATP. The ATP gamma phosphate is transferred to the NDP beta phosphate via a ping-pong mechanism, using a phosphorylated active-site intermediate. The sequence is that of Nucleoside diphosphate kinase from Nostoc punctiforme (strain ATCC 29133 / PCC 73102).